The primary structure comprises 101 residues: Integration host factor subunit beta (101 aa).

Residues 57–77 (PARAGRNPRTGAHVPVDQKSV) form a disordered region.

The protein belongs to the bacterial histone-like protein family. As to quaternary structure, heterodimer of an alpha and a beta chain.

Its function is as follows. This protein is one of the two subunits of integration host factor, a specific DNA-binding protein that functions in genetic recombination as well as in transcriptional and translational control. This Rhodopseudomonas palustris (strain HaA2) protein is Integration host factor subunit beta.